Here is a 252-residue protein sequence, read N- to C-terminus: Ubiquinone biosynthesis protein COQ4 homolog 1, mitochondrial (252 aa).

H130, D131, H134, and E146 together coordinate Zn(2+).

This sequence belongs to the COQ4 family. Component of a multi-subunit COQ enzyme complex. The cofactor is Zn(2+).

It localises to the mitochondrion inner membrane. The catalysed reaction is a 4-hydroxy-3-methoxy-5-(all-trans-polyprenyl)benzoate + H(+) = a 2-methoxy-6-(all-trans-polyprenyl)phenol + CO2. It participates in cofactor biosynthesis; ubiquinone biosynthesis. In terms of biological role, lyase that catalyzes the C1-decarboxylation of 4-hydroxy-3-methoxy-5-(all-trans-polyprenyl)benzoic acid into 2-methoxy-6-(all-trans-polyprenyl)phenol during ubiquinone biosynthesis. This is Ubiquinone biosynthesis protein COQ4 homolog 1, mitochondrial from Trypanosoma cruzi (strain CL Brener).